Consider the following 74-residue polypeptide: Putative sulfur carrier protein NMA0882 (74 aa).

The active-site Cysteine persulfide intermediate is C13.

The protein belongs to the sulfur carrier protein TusA family.

In Neisseria meningitidis serogroup A / serotype 4A (strain DSM 15465 / Z2491), this protein is Putative sulfur carrier protein NMA0882.